A 241-amino-acid polypeptide reads, in one-letter code: ATP synthase subunit a (241 aa).

The next 6 membrane-spanning stretches (helical) occupy residues 19 to 39 (AVLI…AKMA), 80 to 100 (LVAA…IPGF), 106 to 126 (NINV…YEGI), 135 to 155 (FAHF…IEIV), 177 to 197 (LFLW…AYLL), and 203 to 223 (LLQT…AVAI).

This sequence belongs to the ATPase A chain family. F-type ATPases have 2 components, CF(1) - the catalytic core - and CF(0) - the membrane proton channel. CF(1) has five subunits: alpha(3), beta(3), gamma(1), delta(1), epsilon(1). CF(0) has three main subunits: a(1), b(2) and c(9-12). The alpha and beta chains form an alternating ring which encloses part of the gamma chain. CF(1) is attached to CF(0) by a central stalk formed by the gamma and epsilon chains, while a peripheral stalk is formed by the delta and b chains.

It localises to the cell inner membrane. In terms of biological role, key component of the proton channel; it plays a direct role in the translocation of protons across the membrane. The protein is ATP synthase subunit a of Sulfurovum sp. (strain NBC37-1).